The primary structure comprises 442 residues: Proline--tRNA ligase (442 aa).

This sequence belongs to the class-II aminoacyl-tRNA synthetase family. ProS type 2 subfamily. In terms of assembly, homodimer.

The protein resides in the cytoplasm. It carries out the reaction tRNA(Pro) + L-proline + ATP = L-prolyl-tRNA(Pro) + AMP + diphosphate. In terms of biological role, catalyzes the attachment of proline to tRNA(Pro) in a two-step reaction: proline is first activated by ATP to form Pro-AMP and then transferred to the acceptor end of tRNA(Pro). In Brucella melitensis biotype 2 (strain ATCC 23457), this protein is Proline--tRNA ligase.